Reading from the N-terminus, the 165-residue chain is DELTA-actitoxin-Oor1a (165 aa).

The segment at 1-17 (ATFRVLAKVLAELGKVS) is N-terminal region. 5 residues coordinate phosphocholine: Ser41, Val74, Ser92, Pro94, and Tyr125. Positions 92-107 (SVPYDYNLYSNWWNVK) are trp-rich region, which is important for the binding to lipid membrane.

The protein belongs to the actinoporin family. Sea anemone subfamily. As to quaternary structure, octamer or nonamer in membranes. Monomer in the soluble state.

Its subcellular location is the secreted. It is found in the nematocyst. It localises to the target cell membrane. In terms of biological role, pore-forming protein that forms cations-selective hydrophilic pores of around 1 nm and causes cardiac stimulation and cytolysis. Pore formation is a multi-step process that involves specific recognition of membrane sphingomyelin (but neither cholesterol nor phosphatidylcholine) using aromatic rich region and adjacent phosphocholine (POC) binding site, firm binding to the membrane (mainly driven by hydrophobic interactions) accompanied by the transfer of the N-terminal region to the lipid-water interface and finally pore formation after oligomerization of monomers. Cytolytic effects include red blood cells hemolysis, platelet aggregation and lysis, cytotoxic and cytostatic effects on fibroblasts. Lethality in mammals has been ascribed to severe vasospasm of coronary vessels, cardiac arrhythmia, and inotropic effects. This is DELTA-actitoxin-Oor1a from Oulactis orientalis (Japan anemone).